We begin with the raw amino-acid sequence, 176 residues long: NAD(P)H-quinone oxidoreductase subunit I, chloroplastic (176 aa).

2 4Fe-4S ferredoxin-type domains span residues 55–84 (GRIHFEFDKCIACEVCVRVCPINLPVVNWE) and 95–124 (QTYSIDFGVCIFCGNCVEYCPTNCLSMTEE). 8 residues coordinate [4Fe-4S] cluster: Cys-64, Cys-67, Cys-70, Cys-74, Cys-104, Cys-107, Cys-110, and Cys-114.

This sequence belongs to the complex I 23 kDa subunit family. As to quaternary structure, NDH is composed of at least 16 different subunits, 5 of which are encoded in the nucleus. The cofactor is [4Fe-4S] cluster.

It localises to the plastid. The protein localises to the chloroplast thylakoid membrane. The catalysed reaction is a plastoquinone + NADH + (n+1) H(+)(in) = a plastoquinol + NAD(+) + n H(+)(out). It catalyses the reaction a plastoquinone + NADPH + (n+1) H(+)(in) = a plastoquinol + NADP(+) + n H(+)(out). Its function is as follows. NDH shuttles electrons from NAD(P)H:plastoquinone, via FMN and iron-sulfur (Fe-S) centers, to quinones in the photosynthetic chain and possibly in a chloroplast respiratory chain. The immediate electron acceptor for the enzyme in this species is believed to be plastoquinone. Couples the redox reaction to proton translocation, and thus conserves the redox energy in a proton gradient. This Mesostigma viride (Green alga) protein is NAD(P)H-quinone oxidoreductase subunit I, chloroplastic.